The following is a 154-amino-acid chain: Myoglobin (154 aa).

A Globin domain is found at 2 to 148 (GLSDGEWELV…FRNDIAAKYK (147 aa)). At serine 4 the chain carries Phosphoserine. Threonine 68 bears the Phosphothreonine mark. Histidine 94 contacts heme b.

The protein belongs to the globin family. As to quaternary structure, monomeric.

It localises to the cytoplasm. It is found in the sarcoplasm. It catalyses the reaction Fe(III)-heme b-[protein] + nitric oxide + H2O = Fe(II)-heme b-[protein] + nitrite + 2 H(+). It carries out the reaction H2O2 + AH2 = A + 2 H2O. Functionally, monomeric heme protein which primary function is to store oxygen and facilitate its diffusion within muscle tissues. Reversibly binds oxygen through a pentacoordinated heme iron and enables its timely and efficient release as needed during periods of heightened demand. Depending on the oxidative conditions of tissues and cells, and in addition to its ability to bind oxygen, it also has a nitrite reductase activity whereby it regulates the production of bioactive nitric oxide. Under stress conditions, like hypoxia and anoxia, it also protects cells against reactive oxygen species thanks to its pseudoperoxidase activity. In Loxodonta africana (African elephant), this protein is Myoglobin (MB).